Here is a 43-residue protein sequence, read N- to C-terminus: Protein PsbN (43 aa).

Residues 4–24 (GILIVIFISCLLVSFTGYAVY) traverse the membrane as a helical segment.

The protein belongs to the PsbN family.

Its subcellular location is the plastid. It is found in the chloroplast thylakoid membrane. Its function is as follows. May play a role in photosystem I and II biogenesis. The sequence is that of Protein PsbN from Coleochaete orbicularis (Charophycean green alga).